A 348-amino-acid polypeptide reads, in one-letter code: Spermidine/putrescine import ATP-binding protein PotA (348 aa).

An ABC transporter domain is found at 6-236 (IRLVNVTKEY…PKNVFVADFI (231 aa)). Residue 38–45 (GPSGCGKT) coordinates ATP.

The protein belongs to the ABC transporter superfamily. Spermidine/putrescine importer (TC 3.A.1.11.1) family. In terms of assembly, the complex is composed of two ATP-binding proteins (PotA), two transmembrane proteins (PotB and PotC) and a solute-binding protein (PotD).

The protein resides in the cell membrane. It carries out the reaction ATP + H2O + polyamine-[polyamine-binding protein]Side 1 = ADP + phosphate + polyamineSide 2 + [polyamine-binding protein]Side 1.. Functionally, part of the ABC transporter complex PotABCD involved in spermidine/putrescine import. Responsible for energy coupling to the transport system. The polypeptide is Spermidine/putrescine import ATP-binding protein PotA (Desulfitobacterium hafniense (strain Y51)).